The sequence spans 79 residues: Cell division protein ZapB (79 aa).

Positions 4-78 (EVFEKLESKV…LRALLGKMEE (75 aa)) form a coiled coil.

Belongs to the ZapB family. Homodimer. The ends of the coiled-coil dimer bind to each other, forming polymers. Interacts with FtsZ.

The protein resides in the cytoplasm. In terms of biological role, non-essential, abundant cell division factor that is required for proper Z-ring formation. It is recruited early to the divisome by direct interaction with FtsZ, stimulating Z-ring assembly and thereby promoting cell division earlier in the cell cycle. Its recruitment to the Z-ring requires functional FtsA or ZipA. This chain is Cell division protein ZapB, found in Serratia proteamaculans (strain 568).